The chain runs to 325 residues: GTP 3',8-cyclase (325 aa).

Residues 4–219 form the Radical SAM core domain; sequence TYQREINYLR…DAISAKLGPL (216 aa). Residue Arg13 participates in GTP binding. Positions 20 and 24 each coordinate [4Fe-4S] cluster. An S-adenosyl-L-methionine-binding site is contributed by Tyr26. Cys27 contributes to the [4Fe-4S] cluster binding site. Arg63 contacts GTP. An S-adenosyl-L-methionine-binding site is contributed by Gly67. Thr94 serves as a coordination point for GTP. Residue Ser118 participates in S-adenosyl-L-methionine binding. Residue Lys155 coordinates GTP. Met189 contacts S-adenosyl-L-methionine. Residues Cys254 and Cys257 each coordinate [4Fe-4S] cluster. 259-261 lines the GTP pocket; sequence RLR. Cys271 is a [4Fe-4S] cluster binding site.

It belongs to the radical SAM superfamily. MoaA family. As to quaternary structure, monomer and homodimer. It depends on [4Fe-4S] cluster as a cofactor.

The enzyme catalyses GTP + AH2 + S-adenosyl-L-methionine = (8S)-3',8-cyclo-7,8-dihydroguanosine 5'-triphosphate + 5'-deoxyadenosine + L-methionine + A + H(+). The protein operates within cofactor biosynthesis; molybdopterin biosynthesis. In terms of biological role, catalyzes the cyclization of GTP to (8S)-3',8-cyclo-7,8-dihydroguanosine 5'-triphosphate. This Pelotomaculum thermopropionicum (strain DSM 13744 / JCM 10971 / SI) protein is GTP 3',8-cyclase.